A 487-amino-acid chain; its full sequence is Glutamyl-tRNA(Gln) amidotransferase subunit A (487 aa).

Residues Lys74 and Ser149 each act as charge relay system in the active site. Ser173 functions as the Acyl-ester intermediate in the catalytic mechanism.

This sequence belongs to the amidase family. GatA subfamily. As to quaternary structure, heterotrimer of A, B and C subunits.

It carries out the reaction L-glutamyl-tRNA(Gln) + L-glutamine + ATP + H2O = L-glutaminyl-tRNA(Gln) + L-glutamate + ADP + phosphate + H(+). In terms of biological role, allows the formation of correctly charged Gln-tRNA(Gln) through the transamidation of misacylated Glu-tRNA(Gln) in organisms which lack glutaminyl-tRNA synthetase. The reaction takes place in the presence of glutamine and ATP through an activated gamma-phospho-Glu-tRNA(Gln). In Synechococcus sp. (strain CC9311), this protein is Glutamyl-tRNA(Gln) amidotransferase subunit A.